The primary structure comprises 474 residues: E3 ubiquitin-protein ligase RNF14 (474 aa).

Residues 11 to 137 form the RWD domain; the sequence is DELLALASIY…QFLKEETLAY (127 aa). A D-box motif is present at residues 37–45; that stretch reads RIYLDLPQN. A TRIAD supradomain region spans residues 216–457; it reads KLFLCSICFC…DPGSPCFNRL (242 aa). The Zn(2+) site is built by cysteine 220, cysteine 223, cysteine 238, histidine 240, cysteine 243, cysteine 246, cysteine 265, cysteine 270, cysteine 309, cysteine 314, cysteine 329, cysteine 332, cysteine 337, cysteine 340, and histidine 345. The RING-type 1 zinc finger occupies 220 to 270; it reads CSICFCEKLGSECMYFLECRHVYCKACLKDYFEIQIRDGQVQCLNCPEPKC. The IBR-type zinc-finger motif lies at 289 to 350; the sequence is ARYDRLLLQS…RLTYHGVSPC (62 aa). At serine 348 the chain carries Phosphoserine. Cysteine 350 lines the Zn(2+) pocket. A coiled-coil region spans residues 351-395; that stretch reads KVTAEKLMDLRNEYLQADEANKRLLDQRYGKRVIQKALEEMESKE. The interval 361 to 474 is interaction with androgen receptor; that stretch reads RNEYLQADEA…DDIWEDEVED (114 aa). The Zn(2+) site is built by cysteine 404 and cysteine 407. The RING-type 2; atypical zinc finger occupies 404 to 433; sequence CPCCGTPIEKLDGCNKMTCTGCMQYFCWIC. Cysteine 417 is an active-site residue. Zn(2+) contacts are provided by cysteine 422, cysteine 425, cysteine 430, cysteine 433, histidine 445, and cysteine 453.

The protein belongs to the RBR family. RNF14 subfamily. As to quaternary structure, interacts with GCN1; interaction takes place in response to ribosome collisions and is required for ubiquitination of EEF1A1/eEF1A. Interacts with the ubiquitin-conjugating enzymes UBE2E1 and UBE2E2. Interacts with AR/androgen receptor. Interacts with TCF7/TCF1, TCF7L1/TCF3 and TCF7L2/TCF4; promoting Wnt signaling. RING-type zinc finger-dependent and UBE2E2-dependent autoubiquitination. Widely expressed.

The protein localises to the cytoplasm. It is found in the nucleus. It catalyses the reaction [E2 ubiquitin-conjugating enzyme]-S-ubiquitinyl-L-cysteine + [acceptor protein]-L-lysine = [E2 ubiquitin-conjugating enzyme]-L-cysteine + [acceptor protein]-N(6)-ubiquitinyl-L-lysine.. It participates in protein modification; protein ubiquitination. Its function is as follows. E3 ubiquitin-protein ligase that plays a key role in the RNF14-RNF25 translation quality control pathway, a pathway that takes place when a ribosome has stalled during translation, and which promotes ubiquitination and degradation of translation factors on stalled ribosomes. Recruited to stalled ribosomes by the ribosome collision sensor GCN1 and mediates 'Lys-6'-linked ubiquitination of target proteins, leading to their degradation. Mediates ubiquitination of EEF1A1/eEF1A and ETF1/eRF1 translation factors on stalled ribosomes, leading to their degradation. Also catalyzes ubiquitination of ribosomal proteins RPL0, RPL1, RPL12, RPS13 and RPS17. Specifically required to resolve RNA-protein cross-links caused by reactive aldehydes, which trigger translation stress by stalling ribosomes: acts by catalying 'Lys-6'-linked ubiquitination of RNA-protein cross-links, leading to their removal by the ATP-dependent unfoldase VCP and subsequent degradation by the proteasome. Independently of its function in the response to stalled ribosomes, acts as a regulator of transcription in Wnt signaling via its interaction with TCF transcription factors (TCF7/TCF1, TCF7L1/TCF3 and TCF7L2/TCF4). May also play a role as a coactivator for androgen- and, to a lesser extent, progesterone-dependent transcription. The polypeptide is E3 ubiquitin-protein ligase RNF14 (Homo sapiens (Human)).